Here is a 136-residue protein sequence, read N- to C-terminus: Large ribosomal subunit protein uL22 (136 aa).

This sequence belongs to the universal ribosomal protein uL22 family. As to quaternary structure, part of the 50S ribosomal subunit.

In terms of biological role, this protein binds specifically to 23S rRNA; its binding is stimulated by other ribosomal proteins, e.g. L4, L17, and L20. It is important during the early stages of 50S assembly. It makes multiple contacts with different domains of the 23S rRNA in the assembled 50S subunit and ribosome. Its function is as follows. The globular domain of the protein is located near the polypeptide exit tunnel on the outside of the subunit, while an extended beta-hairpin is found that lines the wall of the exit tunnel in the center of the 70S ribosome. In Leifsonia xyli subsp. xyli (strain CTCB07), this protein is Large ribosomal subunit protein uL22.